Here is a 239-residue protein sequence, read N- to C-terminus: Fatty acid metabolism regulator protein (239 aa).

The HTH gntR-type domain maps to 6–74 (QSPAGFAEEY…HGKPTKVNNF (69 aa)). Residues 34 to 53 (ERELSELIGVTRTTLREVLQ) constitute a DNA-binding region (H-T-H motif).

As to quaternary structure, homodimer.

Its subcellular location is the cytoplasm. Its function is as follows. Multifunctional regulator of fatty acid metabolism. Represses transcription of at least eight genes required for fatty acid transport and beta-oxidation including fadA, fadB, fadD, fadL and fadE. Activates transcription of at least three genes required for unsaturated fatty acid biosynthesis: fabA, fabB and iclR, the gene encoding the transcriptional regulator of the aceBAK operon encoding the glyoxylate shunt enzymes. Binding of FadR is specifically inhibited by long chain fatty acyl-CoA compounds. The polypeptide is Fatty acid metabolism regulator protein (Salmonella typhimurium (strain LT2 / SGSC1412 / ATCC 700720)).